The sequence spans 200 residues: Large ribosomal subunit protein uL4 (200 aa).

The interval 38-75 (GRQGSKQQKNRSDVSGGGKRPWRQKGTGRARAGTSRGP) is disordered.

It belongs to the universal ribosomal protein uL4 family. Part of the 50S ribosomal subunit.

One of the primary rRNA binding proteins, this protein initially binds near the 5'-end of the 23S rRNA. It is important during the early stages of 50S assembly. It makes multiple contacts with different domains of the 23S rRNA in the assembled 50S subunit and ribosome. In terms of biological role, forms part of the polypeptide exit tunnel. This Azotobacter vinelandii (strain DJ / ATCC BAA-1303) protein is Large ribosomal subunit protein uL4.